We begin with the raw amino-acid sequence, 254 residues long: 3-deoxy-manno-octulosonate cytidylyltransferase (254 aa).

This sequence belongs to the KdsB family.

The protein resides in the cytoplasm. It carries out the reaction 3-deoxy-alpha-D-manno-oct-2-ulosonate + CTP = CMP-3-deoxy-beta-D-manno-octulosonate + diphosphate. It participates in nucleotide-sugar biosynthesis; CMP-3-deoxy-D-manno-octulosonate biosynthesis; CMP-3-deoxy-D-manno-octulosonate from 3-deoxy-D-manno-octulosonate and CTP: step 1/1. Its pathway is bacterial outer membrane biogenesis; lipopolysaccharide biosynthesis. Activates KDO (a required 8-carbon sugar) for incorporation into bacterial lipopolysaccharide in Gram-negative bacteria. The sequence is that of 3-deoxy-manno-octulosonate cytidylyltransferase from Bordetella pertussis (strain Tohama I / ATCC BAA-589 / NCTC 13251).